A 368-amino-acid polypeptide reads, in one-letter code: MAARSELLRSAFGKASPSLGWFIVNPHRYSYRWWHMFLIMLVLYSAWASPFELSMEKAASIALVVIRPSGRCLLRHRHCHILLRHLVTGKRQGLWGLLNLLRLWRLRCASKLFARVEKDVRFSYLWTRLIKLLCVTLFALHFAACIYLWMVFNYKIKELTWIGSQIHSFEDRSVWFCYTCAVYWSITTLATVGYGDLHATNIGEMLFSIAFMLFNMGLTSYIIGNITNLVVRETSNTFKMRDMVQWVSEFGSMNRLPEVMREQMLANGQLRFRTKEQLQHEHVKRIGPRGMVGEIGVMFSIPQPFTIRSRRLTQVVRISHIHLLQAVRPNTADGCIVFSNFILVSDFVEYLESLKVQTKEVAFVSGHL.

Helical transmembrane passes span 33 to 53 (WWHMFLIMLVLYSAWASPFEL), 97 to 117 (LLNLLRLWRLRCASKLFARVE), and 132 to 152 (LLCVTLFALHFAACIYLWMVF). Residues 180–199 (CAVYWSITTLATVGYGDLHA) constitute an intramembrane region (pore-forming). The chain crosses the membrane as a helical span at residues 206 to 226 (LFSIAFMLFNMGLTSYIIGNI). 225-344 (NITNLVVRET…CIVFSNFILV (120 aa)) is an a nucleoside 3',5'-cyclic phosphate binding site.

The protein belongs to the potassium channel family. Plant (TC 1.A.1.4) subfamily.

It localises to the membrane. In terms of biological role, putative inward-rectifying potassium channel. The protein is Putative potassium channel KAT5 of Oryza sativa subsp. japonica (Rice).